A 556-amino-acid polypeptide reads, in one-letter code: 2-succinyl-5-enolpyruvyl-6-hydroxy-3-cyclohexene-1-carboxylate synthase (556 aa).

It belongs to the TPP enzyme family. MenD subfamily. In terms of assembly, homodimer. Mg(2+) is required as a cofactor. Mn(2+) serves as cofactor. The cofactor is thiamine diphosphate.

It catalyses the reaction isochorismate + 2-oxoglutarate + H(+) = 5-enolpyruvoyl-6-hydroxy-2-succinyl-cyclohex-3-ene-1-carboxylate + CO2. It functions in the pathway quinol/quinone metabolism; 1,4-dihydroxy-2-naphthoate biosynthesis; 1,4-dihydroxy-2-naphthoate from chorismate: step 2/7. The protein operates within quinol/quinone metabolism; menaquinone biosynthesis. Catalyzes the thiamine diphosphate-dependent decarboxylation of 2-oxoglutarate and the subsequent addition of the resulting succinic semialdehyde-thiamine pyrophosphate anion to isochorismate to yield 2-succinyl-5-enolpyruvyl-6-hydroxy-3-cyclohexene-1-carboxylate (SEPHCHC). The chain is 2-succinyl-5-enolpyruvyl-6-hydroxy-3-cyclohexene-1-carboxylate synthase from Citrobacter koseri (strain ATCC BAA-895 / CDC 4225-83 / SGSC4696).